The sequence spans 65 residues: Large ribosomal subunit protein bL35 (65 aa).

Residues 1–40 (MPKMKTNSGSKKRFALTGTGKIKRKHAFHSHILTKKSKKR) form a disordered region. Basic residues predominate over residues 21–40 (KIKRKHAFHSHILTKKSKKR).

Belongs to the bacterial ribosomal protein bL35 family.

The sequence is that of Large ribosomal subunit protein bL35 from Bacteroides fragilis (strain ATCC 25285 / DSM 2151 / CCUG 4856 / JCM 11019 / LMG 10263 / NCTC 9343 / Onslow / VPI 2553 / EN-2).